The primary structure comprises 327 residues: Tetraspanin-4 (327 aa).

The Cytoplasmic portion of the chain corresponds to 1-6; that stretch reads MRSRSN. Residues 7 to 27 traverse the membrane as a helical segment; sequence LIGLINFFTFLLSIPILGGGI. Over 28–43 the chain is Extracellular; sequence WLSSRANSTDCLRFLQ. An N-linked (GlcNAc...) asparagine glycan is attached at asparagine 34. Residues 44–64 form a helical membrane-spanning segment; it reads WPLIIIGISIMVISLAGIAGA. Topologically, residues 65 to 75 are cytoplasmic; the sequence is CYQNKFLMWLY. Residues 76–96 form a helical membrane-spanning segment; the sequence is LFTMFFVIAALIGFTIFAYVV. At 97–235 the chain is on the extracellular side; the sequence is TDKGSGRFVM…LGSLKKSWRK (139 aa). Asparagine 187 is a glycosylation site (N-linked (GlcNAc...) asparagine). The helical transmembrane segment at 236–256 threads the bilayer; sequence VSVINIVVVIILVIFYVIACA. Over 257–287 the chain is Cytoplasmic; that stretch reads AYQNVKRMYNDEPVGEARMTNLILVIFKFKE. Residues 288-308 form a helical membrane-spanning segment; it reads ILVQFFFGIVFLLLFNGLMVC. Topologically, residues 309-327 are extracellular; the sequence is CCNDKFAFSVFFFGYVTYA.

The protein belongs to the tetraspanin (TM4SF) family.

It is found in the membrane. Its function is as follows. May be involved in the regulation of cell differentiation. In Arabidopsis thaliana (Mouse-ear cress), this protein is Tetraspanin-4 (TET4).